Reading from the N-terminus, the 283-residue chain is Phosphate import ATP-binding protein PstB (283 aa).

The segment covering 1–20 (MAQTLAQTKQISQSHTFDVS) has biased composition (polar residues). Positions 1-32 (MAQTLAQTKQISQSHTFDVSQSHHKTPDDTNS) are disordered. The ABC transporter domain occupies 37-278 (YSTQNLDLWY…PSNKKTEDYI (242 aa)). An ATP-binding site is contributed by 69–76 (GPSGCGKS).

It belongs to the ABC transporter superfamily. Phosphate importer (TC 3.A.1.7) family. The complex is composed of two ATP-binding proteins (PstB), two transmembrane proteins (PstC and PstA) and a solute-binding protein (PstS).

Its subcellular location is the cell membrane. It catalyses the reaction phosphate(out) + ATP + H2O = ADP + 2 phosphate(in) + H(+). Functionally, part of the ABC transporter complex PstSACB involved in phosphate import. Responsible for energy coupling to the transport system. This is Phosphate import ATP-binding protein PstB from Staphylococcus aureus (strain MRSA252).